A 134-amino-acid chain; its full sequence is Small ribosomal subunit protein uS11 (134 aa).

It belongs to the universal ribosomal protein uS11 family. In terms of assembly, part of the 30S ribosomal subunit. Interacts with proteins S7 and S18. Binds to IF-3.

Functionally, located on the platform of the 30S subunit, it bridges several disparate RNA helices of the 16S rRNA. Forms part of the Shine-Dalgarno cleft in the 70S ribosome. The protein is Small ribosomal subunit protein uS11 of Frankia alni (strain DSM 45986 / CECT 9034 / ACN14a).